Consider the following 124-residue polypeptide: Ribonuclease pancreatic (124 aa).

The span at 1–13 (KESAAAKFERQHM) shows a compositional bias: basic and acidic residues. A disordered region spans residues 1–23 (KESAAAKFERQHMDPSASSISSS). Lysine 7 and arginine 10 together coordinate substrate. Histidine 12 serves as the catalytic Proton acceptor. Cystine bridges form between cysteine 26–cysteine 84, cysteine 40–cysteine 95, cysteine 58–cysteine 110, and cysteine 65–cysteine 72. Asparagine 34 is a glycosylation site (N-linked (GlcNAc...) asparagine). Substrate contacts are provided by residues 41 to 45 (KPVNT), lysine 66, and arginine 85. The Proton donor role is filled by histidine 119.

It belongs to the pancreatic ribonuclease family. Monomer. Interacts with and forms tight 1:1 complexes with RNH1. Dimerization of two such complexes may occur. Interaction with RNH1 inhibits this protein. In terms of tissue distribution, pancreas.

It is found in the secreted. The catalysed reaction is an [RNA] containing cytidine + H2O = an [RNA]-3'-cytidine-3'-phosphate + a 5'-hydroxy-ribonucleotide-3'-[RNA].. It catalyses the reaction an [RNA] containing uridine + H2O = an [RNA]-3'-uridine-3'-phosphate + a 5'-hydroxy-ribonucleotide-3'-[RNA].. Its function is as follows. Endonuclease that catalyzes the cleavage of RNA on the 3' side of pyrimidine nucleotides. Acts on single-stranded and double-stranded RNA. This is Ribonuclease pancreatic (RNASE1) from Alces alces alces (European moose).